We begin with the raw amino-acid sequence, 164 residues long: Vasopressin-neurophysin 2-copeptin (164 aa).

The first 19 residues, 1–19 (MPDTMLPACFLGLLAFSSA), serve as a signal peptide directing secretion. Cys-20 and Cys-25 are oxidised to a cystine. Glycine amide is present on Gly-28. 7 disulfides stabilise this stretch: Cys-41–Cys-85, Cys-44–Cys-58, Cys-52–Cys-75, Cys-59–Cys-65, Cys-92–Cys-104, Cys-98–Cys-116, and Cys-105–Cys-110. Residue Asn-131 is glycosylated (N-linked (GlcNAc...) asparagine).

It belongs to the vasopressin/oxytocin family. Interacts with vasopressin receptors V1bR/AVPR1B (Ki=85 pM), V1aR/AVPR1A (Ki=0.6 nM) and V2R/AVPR2 (Ki=4.9 nM). Interacts with oxytocin receptor (OXTR) (Ki=110 nM). In terms of assembly, (Microbial infection) May interact with SARS coronavirus-2/SARS-CoV-2; they may form a complex with secreted ACE2.

The protein resides in the secreted. In terms of biological role, specifically binds vasopressin. Functionally, has a direct antidiuretic action on the kidney, it also causes vasoconstriction of the peripheral vessels. Acts by binding to vasopressin receptors (V1bR/AVPR1B, V1aR/AVPR1A, and V2R/AVPR2). This chain is Vasopressin-neurophysin 2-copeptin (AVP), found in Homo sapiens (Human).